Here is a 62-residue protein sequence, read N- to C-terminus: UPF0291 protein CLK_1994 (62 aa).

Belongs to the UPF0291 family.

The protein resides in the cytoplasm. In Clostridium botulinum (strain Loch Maree / Type A3), this protein is UPF0291 protein CLK_1994.